Reading from the N-terminus, the 341-residue chain is Methionine import ATP-binding protein MetN 1 (341 aa).

The 240-residue stretch at 2–241 (IEFRQVSKTF…PKTTIAQNFV (240 aa)) folds into the ABC transporter domain. 38-45 (GYSGAGKS) provides a ligand contact to ATP.

This sequence belongs to the ABC transporter superfamily. Methionine importer (TC 3.A.1.24) family. The complex is composed of two ATP-binding proteins (MetN), two transmembrane proteins (MetI) and a solute-binding protein (MetQ).

The protein resides in the cell membrane. The catalysed reaction is L-methionine(out) + ATP + H2O = L-methionine(in) + ADP + phosphate + H(+). It catalyses the reaction D-methionine(out) + ATP + H2O = D-methionine(in) + ADP + phosphate + H(+). Part of the ABC transporter complex MetNIQ involved in methionine import. Responsible for energy coupling to the transport system. This is Methionine import ATP-binding protein MetN 1 from Staphylococcus aureus (strain USA300).